Consider the following 155-residue polypeptide: Ribosome maturation factor RimP (155 aa).

Belongs to the RimP family.

It is found in the cytoplasm. Functionally, required for maturation of 30S ribosomal subunits. The sequence is that of Ribosome maturation factor RimP from Prochlorococcus marinus (strain MIT 9211).